The following is a 946-amino-acid chain: Bifunctional glutamine synthetase adenylyltransferase/adenylyl-removing enzyme (946 aa).

Residues methionine 1–glutamate 440 are adenylyl removase. The segment at serine 449 to glutamate 946 is adenylyl transferase.

This sequence belongs to the GlnE family. Mg(2+) is required as a cofactor.

The catalysed reaction is [glutamine synthetase]-O(4)-(5'-adenylyl)-L-tyrosine + phosphate = [glutamine synthetase]-L-tyrosine + ADP. It catalyses the reaction [glutamine synthetase]-L-tyrosine + ATP = [glutamine synthetase]-O(4)-(5'-adenylyl)-L-tyrosine + diphosphate. Its function is as follows. Involved in the regulation of glutamine synthetase GlnA, a key enzyme in the process to assimilate ammonia. When cellular nitrogen levels are high, the C-terminal adenylyl transferase (AT) inactivates GlnA by covalent transfer of an adenylyl group from ATP to specific tyrosine residue of GlnA, thus reducing its activity. Conversely, when nitrogen levels are low, the N-terminal adenylyl removase (AR) activates GlnA by removing the adenylyl group by phosphorolysis, increasing its activity. The regulatory region of GlnE binds the signal transduction protein PII (GlnB) which indicates the nitrogen status of the cell. The protein is Bifunctional glutamine synthetase adenylyltransferase/adenylyl-removing enzyme of Escherichia coli O6:H1 (strain CFT073 / ATCC 700928 / UPEC).